A 354-amino-acid chain; its full sequence is MIVIFVDFDYFFAQVEEVLNPQYKGKPLVVCVYSGRTKTSGAVATANYEARKLGVKAGMPIIKAMQIAPSAIYVPMRKPIYEAFSNRIMNLLNKHADKIEVASIDEAYLDVTNKVEGNFENGIELARKIKQEILEKEKITVTVGVAPNKILAKIIADKSKPNGLGVIRPTEVQDFLNELDIDEIPGIGSVLARRLNELGIQKLRDILSKNYNELEKITGKAKALYLLKLAQNKYSEPVENKSKIPHGRYLTLPYNTRDVKVILPYLKKAINEAYNKVNGIPMRITVIAIMEDLDILSKGKKFKHGISIDNAYKVAEDLLRELLVRDKRRNVRRIGVKLDNIIINKTNLSDFFDI.

One can recognise a UmuC domain in the interval 3-188 (VIFVDFDYFF…LDIDEIPGIG (186 aa)). Residues Asp-7 and Asp-105 each contribute to the Mg(2+) site. The active site involves Glu-106.

It belongs to the DNA polymerase type-Y family. As to quaternary structure, monomer. Requires Mg(2+) as cofactor.

The protein localises to the cytoplasm. The catalysed reaction is DNA(n) + a 2'-deoxyribonucleoside 5'-triphosphate = DNA(n+1) + diphosphate. Poorly processive, error-prone DNA polymerase involved in untargeted mutagenesis. Copies undamaged DNA at stalled replication forks, which arise in vivo from mismatched or misaligned primer ends. These misaligned primers can be extended by PolIV. Exhibits no 3'-5' exonuclease (proofreading) activity. May be involved in translesional synthesis. In Sulfolobus acidocaldarius (strain ATCC 33909 / DSM 639 / JCM 8929 / NBRC 15157 / NCIMB 11770), this protein is DNA polymerase IV.